A 79-amino-acid polypeptide reads, in one-letter code: Beta-defensin 15 (79 aa).

The first 20 residues, 1 to 20, serve as a signal peptide directing secretion; the sequence is MKTFLFLFAVLFFLDPAKNA. Cystine bridges form between Cys26-Cys53, Cys33-Cys47, and Cys37-Cys54.

This sequence belongs to the beta-defensin family. Expressed in testis and to a lesser extent in epididymis (caput, corpus and cauda). Also weakly expressed in kidneys and colon.

The protein resides in the secreted. Functionally, has antibacterial activity. In Mus musculus (Mouse), this protein is Beta-defensin 15 (Defb15).